Reading from the N-terminus, the 75-residue chain is UPF0352 protein YejL (75 aa).

It belongs to the UPF0352 family.

The polypeptide is UPF0352 protein YejL (Escherichia coli O139:H28 (strain E24377A / ETEC)).